A 623-amino-acid chain; its full sequence is Lethal(3)malignant brain tumor-like protein 4 (623 aa).

The interval 1-44 (MKQPNRKRKLNMDSKERLDQDGRLEQAEEEKKPKDSTTPLSHVP) is disordered. Over residues 10–35 (LNMDSKERLDQDGRLEQAEEEKKPKD) the composition is skewed to basic and acidic residues. MBT repeat units follow at residues 52–152 (WSWE…LHIP), 160–260 (FVWM…LIAP), and 269–364 (FSWT…LEVP). The CCHHC-type zinc finger occupies 370–414 (LKILPGQAVCPTPGCRGIGHIRGPRYSGHHSAFGCPYSDMNLKKE). Zn(2+)-binding residues include Cys379, Cys384, His398, and Cys404. The 65-residue stretch at 543-607 (WTVDEVAEFV…YNSILMFRHS (65 aa)) folds into the SAM domain.

Its subcellular location is the nucleus. Functionally, putative Polycomb group (PcG) protein. PcG proteins maintain the transcriptionally repressive state of genes, probably via a modification of chromatin, rendering it heritably changed in its expressibility. The chain is Lethal(3)malignant brain tumor-like protein 4 (L3MBTL4) from Homo sapiens (Human).